The following is a 442-amino-acid chain: MAATDLERISNAEPEPRSLSLGGHVGFDSLPDQLVSKSVTQGFSFNILCVGETGIGKSTLMNTFFNTTFETEEASHHEECVRLRPQTYDLQESNVHLKLTIVDAVGFGDQINKDDSYRPIVDYIDTQFENYLQEELKIRRSLFDYHDTRIHVCLYFITPTGHSLKSLDLVTMKKLDSKVNIIPIIAKADTISKSELHKFKIKIMGELVSNGVQIYQFPTDDEAVAEINAVMNAHLPFAVVGSTEEVKVGNKLVRARQYPWGVVQVENENHCDFVKLREMLIRVNMEDLREQTHSRHYELYRRCKLEEMGFQDSDGDSQPFSLQETYEAKRKEFLSELQRKEEEMRQMFVNKVKETELELKEKERELHEKFEHLKRIHQEEKRKVEEKRRELEEETNAFNCRKAAMEALQSQALHATSQQPLRKDKDKKKVGGWSSIYSVTIP.

Residues 1-16 (MAATDLERISNAEPEP) are compositionally biased toward basic and acidic residues. A disordered region spans residues 1-21 (MAATDLERISNAEPEPRSLSL). Residue alanine 2 is modified to N-acetylalanine. Phosphoserine is present on serine 10. Residues 41-307 (QGFSFNILCV…ELYRRCKLEE (267 aa)) form the Septin-type G domain. The G1 motif stretch occupies residues 51–58 (GETGIGKS). GTP-binding positions include 51-58 (GETGIGKS), glycine 106, 187-195 (KADTISKSE), glycine 241, and arginine 256. The interval 103–106 (DAVG) is G3 motif. The tract at residues 186 to 189 (AKAD) is G4 motif. Residues 322–407 (LQETYEAKRK…FNCRKAAMEA (86 aa)) are a coiled coil. Polar residues predominate over residues 411–420 (QALHATSQQP). The interval 411–442 (QALHATSQQPLRKDKDKKKVGGWSSIYSVTIP) is disordered.

Belongs to the TRAFAC class TrmE-Era-EngA-EngB-Septin-like GTPase superfamily. Septin GTPase family. In terms of assembly, septins polymerize into heterooligomeric protein complexes that form filaments, and can associate with cellular membranes, actin filaments and microtubules. GTPase activity is required for filament formation. Interacts with SEPTIN7. Interacts with CDK14, SEPTIN4 and SEPTIN5. Interacts with VAMP2; the interaction inhibits interaction of VAMP2 with SYP. Interacts with STX1A. As to expression, expressed in cerebrum, hippocampus and cerebellum (at protein level). Expressed in heart (at protein level).

The protein localises to the cytoplasm. It localises to the cytoskeleton. It is found in the synapse. The protein resides in the cell projection. Its subcellular location is the axon. The protein localises to the cytoplasmic vesicle. It localises to the secretory vesicle. It is found in the synaptic vesicle membrane. The protein resides in the presynapse. Filament-forming cytoskeletal GTPase. May play a role in platelet secretion. Seems to participate in the process of SNARE complex formation in synaptic vesicles. In Rattus norvegicus (Rat), this protein is Septin-8.